Reading from the N-terminus, the 294-residue chain is Ribosomal RNA small subunit methyltransferase H (294 aa).

S-adenosyl-L-methionine-binding positions include 31-33 (GGY), aspartate 49, phenylalanine 76, aspartate 97, and glutamine 104.

Belongs to the methyltransferase superfamily. RsmH family.

The protein resides in the cytoplasm. It catalyses the reaction cytidine(1402) in 16S rRNA + S-adenosyl-L-methionine = N(4)-methylcytidine(1402) in 16S rRNA + S-adenosyl-L-homocysteine + H(+). In terms of biological role, specifically methylates the N4 position of cytidine in position 1402 (C1402) of 16S rRNA. The sequence is that of Ribosomal RNA small subunit methyltransferase H from Wolbachia pipientis subsp. Culex pipiens (strain wPip).